We begin with the raw amino-acid sequence, 321 residues long: Lipoyl synthase (321 aa).

Residues C68, C73, C79, C94, C98, C101, and S308 each coordinate [4Fe-4S] cluster. Positions 80–297 constitute a Radical SAM core domain; the sequence is FNHGTATFMI…KALADELGFT (218 aa).

Belongs to the radical SAM superfamily. Lipoyl synthase family. Requires [4Fe-4S] cluster as cofactor.

The protein localises to the cytoplasm. The enzyme catalyses [[Fe-S] cluster scaffold protein carrying a second [4Fe-4S](2+) cluster] + N(6)-octanoyl-L-lysyl-[protein] + 2 oxidized [2Fe-2S]-[ferredoxin] + 2 S-adenosyl-L-methionine + 4 H(+) = [[Fe-S] cluster scaffold protein] + N(6)-[(R)-dihydrolipoyl]-L-lysyl-[protein] + 4 Fe(3+) + 2 hydrogen sulfide + 2 5'-deoxyadenosine + 2 L-methionine + 2 reduced [2Fe-2S]-[ferredoxin]. It functions in the pathway protein modification; protein lipoylation via endogenous pathway; protein N(6)-(lipoyl)lysine from octanoyl-[acyl-carrier-protein]: step 2/2. In terms of biological role, catalyzes the radical-mediated insertion of two sulfur atoms into the C-6 and C-8 positions of the octanoyl moiety bound to the lipoyl domains of lipoate-dependent enzymes, thereby converting the octanoylated domains into lipoylated derivatives. This chain is Lipoyl synthase, found in Shewanella frigidimarina (strain NCIMB 400).